We begin with the raw amino-acid sequence, 857 residues long: DNA mismatch repair protein MutS (857 aa).

608-615 (GPNMSGKS) is a binding site for ATP.

Belongs to the DNA mismatch repair MutS family.

This protein is involved in the repair of mismatches in DNA. It is possible that it carries out the mismatch recognition step. This protein has a weak ATPase activity. This chain is DNA mismatch repair protein MutS, found in Lactobacillus gasseri (strain ATCC 33323 / DSM 20243 / BCRC 14619 / CIP 102991 / JCM 1131 / KCTC 3163 / NCIMB 11718 / NCTC 13722 / AM63).